The following is a 357-amino-acid chain: Trans-enoyl reductase buaC (357 aa).

Valine 50–lysine 53 is a binding site for NADP(+). Substrate is bound at residue threonine 135–methionine 142. NADP(+) contacts are provided by residues serine 170–threonine 173, serine 193–asparagine 196, tyrosine 211, and leucine 258–asparagine 259. Alanine 278–threonine 282 is a substrate binding site. An NADP(+)-binding site is contributed by isoleucine 347–serine 348.

It belongs to the zinc-containing alcohol dehydrogenase family. As to quaternary structure, monomer.

It functions in the pathway mycotoxin biosynthesis. Trans-enoyl reductase; part of the gene cluster that mediates the biosynthesis of burnettramic acids, an unusual class of bolaamphiphilic pyrrolizidinediones that display potent antibacterial, antifungal, and cytotoxic activities. The first step of the biosynthesis of burnettramic acids is the hydroxylation of proline by the proline hydroxylase buaE to generate 4-hydroxyproline. The PKS-NRPS buaA and trans-enoyl reductase buaC construct the highly reduced polyketide chain, and the condensation (C) domain of buaA then catalyzes the amide bond formation with the activated 4-hydroxyproline. This is followed by the R domain releasing the nascent polyketide-peptide directly via a Dieckmann condensation to afford a tetramic acid fused to the hydroxyproline, generating the bicyclic pyrrolidinedione moiety. The cytochrome P450 monooxygenases buaD and buaG are likely responsible for the multiple hydroxylations on the polyketide chain and its terminus, although in the heterologous context, buaD does not appear to be required. Therefore, while buaG may be a multifunctional cytochrome P450 monooxygenase, it cannot be ruled out that the two secondary alcohols on the polyketide chain could have an acetate origin. Finally, the glycosyltransferase buaB transfers beta-D-mannose to the aglycone burnettramic acid A to form burnettramic acid A. Burnettramic acid B is a minor cis-pyrrolizidine epimer of burnettramic acid A and it is likely that small amounts of it form naturally in acidic environments. This Petromyces alliaceus (Aspergillus alliaceus) protein is Trans-enoyl reductase buaC.